A 202-amino-acid chain; its full sequence is MNSRIMFIGGVPGVGKTSISGYIARNTDIDIVLSSDYLREFLRPFAPQESHLETSVYDAWKFYGDMSDDNIIRGYLDQARPIMGGINRVIARALANGEDLIIESLYFVPDMMDEMVLKNAFLAYVYIDDPDLHRSRLEDRINYTHRNSPGSRLAAHLKEYRTIMDYSMDMARGRGIGLYSTDDYALARQRLLDDFRKFVDRR.

The enzyme catalyses (R)-3-phosphomevalonate + ATP = (R)-3,5-bisphosphomevalonate + ADP + H(+). The protein operates within isoprenoid biosynthesis; isopentenyl diphosphate biosynthesis via mevalonate pathway. In terms of biological role, phosphorylates mevalonate 3-phosphate to form mevalonate 3,5-bisphosphate. Functions in an alternative mevalonate pathway, only present in extreme acidophiles of the Thermoplasmatales order, which passes through mevalonate 3-phosphate rather than mevalonate 5-phosphate. In Thermoplasma acidophilum (strain ATCC 25905 / DSM 1728 / JCM 9062 / NBRC 15155 / AMRC-C165), this protein is Mevalonate-3-phosphate 5-kinase.